The following is a 318-amino-acid chain: Inner membrane protein YbhN (318 aa).

Topologically, residues 1–13 (MSKSHPRWRLAKK) are periplasmic. Residues 14 to 34 (ILTWLFFIAVIVLLVVYAKKV) traverse the membrane as a helical segment. Residues 35 to 50 (DWEEVWKVIRDYNRVA) lie on the Cytoplasmic side of the membrane. A helical transmembrane segment spans residues 51–71 (LLSAVGLVVVSYLIYGCYDLL). At 72-85 (ARFYCGHKLAKRQV) the chain is on the periplasmic side. Residues 86–106 (MLVSFICYAFNLTLSTWVGGI) form a helical membrane-spanning segment. The Cytoplasmic segment spans residues 107-125 (GMRYRLYSRLGLPGSTITR). The chain crosses the membrane as a helical span at residues 126–146 (IFSLSITTNWLGYILLAGIIF). Residues 147-165 (TAGVVELPDHWYVDQTTLR) are Periplasmic-facing. A helical membrane pass occupies residues 166-186 (ILGIGLLMIIAVYLWFCAFAK). Over 187–205 (HRHMTIKGQKLVLPSWKFA) the chain is Cytoplasmic. A helical transmembrane segment spans residues 206 to 226 (LAQMLISSVNWMVMGAIIWLL). Topologically, residues 227–233 (LGQSVNY) are periplasmic. Transmembrane regions (helical) follow at residues 234-254 (FFVLGVLLVSSIAGVIVHIPA) and 255-275 (GIGVLEAVFIALLAGEHTSKG). Topologically, residues 276-277 (TI) are periplasmic. The helical transmembrane segment at 278 to 298 (IAALLAYRVLYYFIPLLLALI) threads the bilayer. Topologically, residues 299-318 (CYLLLESQAKKLRAKNEAAM) are cytoplasmic.

This sequence to Synechocystis PCC 6803 slr0712.

The protein resides in the cell inner membrane. This chain is Inner membrane protein YbhN (ybhN), found in Escherichia coli (strain K12).